Here is a 284-residue protein sequence, read N- to C-terminus: Bifunctional protein FolD (284 aa).

Residues Gly-165 to Ser-167 and Ser-190 each bind NADP(+).

The protein belongs to the tetrahydrofolate dehydrogenase/cyclohydrolase family. Homodimer.

It catalyses the reaction (6R)-5,10-methylene-5,6,7,8-tetrahydrofolate + NADP(+) = (6R)-5,10-methenyltetrahydrofolate + NADPH. It carries out the reaction (6R)-5,10-methenyltetrahydrofolate + H2O = (6R)-10-formyltetrahydrofolate + H(+). It participates in one-carbon metabolism; tetrahydrofolate interconversion. In terms of biological role, catalyzes the oxidation of 5,10-methylenetetrahydrofolate to 5,10-methenyltetrahydrofolate and then the hydrolysis of 5,10-methenyltetrahydrofolate to 10-formyltetrahydrofolate. The chain is Bifunctional protein FolD from Streptococcus pyogenes serotype M28 (strain MGAS6180).